A 380-amino-acid polypeptide reads, in one-letter code: Queuine tRNA-ribosyltransferase (380 aa).

Catalysis depends on Asp-96, which acts as the Proton acceptor. Substrate-binding positions include 96–100 (DSGGF), Asp-150, Gln-193, and Gly-220. Residues 251 to 257 (GVGAPDS) form an RNA binding region. Catalysis depends on Asp-270, which acts as the Nucleophile. An RNA binding; important for wobble base 34 recognition region spans residues 275 to 279 (TRIAR). Zn(2+)-binding residues include Cys-308, Cys-310, Cys-313, and His-339.

The protein belongs to the queuine tRNA-ribosyltransferase family. In terms of assembly, homodimer. Within each dimer, one monomer is responsible for RNA recognition and catalysis, while the other monomer binds to the replacement base PreQ1. The cofactor is Zn(2+).

It catalyses the reaction 7-aminomethyl-7-carbaguanine + guanosine(34) in tRNA = 7-aminomethyl-7-carbaguanosine(34) in tRNA + guanine. Its pathway is tRNA modification; tRNA-queuosine biosynthesis. Functionally, catalyzes the base-exchange of a guanine (G) residue with the queuine precursor 7-aminomethyl-7-deazaguanine (PreQ1) at position 34 (anticodon wobble position) in tRNAs with GU(N) anticodons (tRNA-Asp, -Asn, -His and -Tyr). Catalysis occurs through a double-displacement mechanism. The nucleophile active site attacks the C1' of nucleotide 34 to detach the guanine base from the RNA, forming a covalent enzyme-RNA intermediate. The proton acceptor active site deprotonates the incoming PreQ1, allowing a nucleophilic attack on the C1' of the ribose to form the product. After dissociation, two additional enzymatic reactions on the tRNA convert PreQ1 to queuine (Q), resulting in the hypermodified nucleoside queuosine (7-(((4,5-cis-dihydroxy-2-cyclopenten-1-yl)amino)methyl)-7-deazaguanosine). This Streptococcus sanguinis (strain SK36) protein is Queuine tRNA-ribosyltransferase.